Reading from the N-terminus, the 65-residue chain is Large ribosomal subunit protein bL35 (65 aa).

It belongs to the bacterial ribosomal protein bL35 family.

This is Large ribosomal subunit protein bL35 from Laribacter hongkongensis (strain HLHK9).